Consider the following 405-residue polypeptide: FAD-dependent monooxygenase thnD (405 aa).

FAD is bound by residues glutamate 30, alanine 45, arginine 106, aspartate 308, and glycine 321.

Belongs to the paxM FAD-dependent monooxygenase family. Requires FAD as cofactor.

In terms of biological role, FAD-dependent monooxygenase; part of the gene cluster that produces the tetronate natural products trihazones. Transcription analysis of thnD confirmed this gene is expressed, hence its role in the biosynthetic pathway remains cryptic. The pathway begins with the formation of trihazone A by the hybrid PKS-NRPS synthetase thnA and the trans-enoyl reductase thnE. Trihazone A is further decarboxylated by the 2-oxoglutarate-dependent dioxygenase thnC to produce trihazone D. The function of the FAD-dependent monooxygenase thnD has still to be identified. This is FAD-dependent monooxygenase thnD from Trichoderma harzianum (Hypocrea lixii).